The chain runs to 482 residues: tRNA sulfurtransferase (482 aa).

The THUMP domain occupies 61-165; it reads LTIRDALTRI…DDRLLLIKGR (105 aa). ATP is bound by residues 183 to 184, K265, G287, and Q296; that span reads LI. C344 and C456 form a disulfide bridge. Positions 404-482 constitute a Rhodanese domain; that stretch reads FGPNDVILDI…GFNNVKVYRP (79 aa). Residue C456 is the Cysteine persulfide intermediate of the active site.

This sequence belongs to the ThiI family.

The protein resides in the cytoplasm. It carries out the reaction [ThiI sulfur-carrier protein]-S-sulfanyl-L-cysteine + a uridine in tRNA + 2 reduced [2Fe-2S]-[ferredoxin] + ATP + H(+) = [ThiI sulfur-carrier protein]-L-cysteine + a 4-thiouridine in tRNA + 2 oxidized [2Fe-2S]-[ferredoxin] + AMP + diphosphate. The enzyme catalyses [ThiS sulfur-carrier protein]-C-terminal Gly-Gly-AMP + S-sulfanyl-L-cysteinyl-[cysteine desulfurase] + AH2 = [ThiS sulfur-carrier protein]-C-terminal-Gly-aminoethanethioate + L-cysteinyl-[cysteine desulfurase] + A + AMP + 2 H(+). It participates in cofactor biosynthesis; thiamine diphosphate biosynthesis. Catalyzes the ATP-dependent transfer of a sulfur to tRNA to produce 4-thiouridine in position 8 of tRNAs, which functions as a near-UV photosensor. Also catalyzes the transfer of sulfur to the sulfur carrier protein ThiS, forming ThiS-thiocarboxylate. This is a step in the synthesis of thiazole, in the thiamine biosynthesis pathway. The sulfur is donated as persulfide by IscS. The polypeptide is tRNA sulfurtransferase (Shigella flexneri).